The chain runs to 444 residues: Glutamate-1-semialdehyde 2,1-aminomutase (444 aa).

An N6-(pyridoxal phosphate)lysine modification is found at Lys267.

It belongs to the class-III pyridoxal-phosphate-dependent aminotransferase family. HemL subfamily. As to quaternary structure, homodimer. Pyridoxal 5'-phosphate serves as cofactor.

It localises to the cytoplasm. The enzyme catalyses (S)-4-amino-5-oxopentanoate = 5-aminolevulinate. It participates in porphyrin-containing compound metabolism; protoporphyrin-IX biosynthesis; 5-aminolevulinate from L-glutamyl-tRNA(Glu): step 2/2. This is Glutamate-1-semialdehyde 2,1-aminomutase from Xylella fastidiosa (strain 9a5c).